The sequence spans 495 residues: Heat stress transcription factor A-1a (495 aa).

A DNA-binding region spans residues 50 to 144 (PPPFLSKTYD…LLKKISRRKS (95 aa)). A disordered region spans residues 140 to 164 (SRRKSVQGHGSSSSNPQSQQLSQGQ). Positions 146 to 164 (QGHGSSSSNPQSQQLSQGQ) are enriched in low complexity. A hydrophobic repeat HR-A/B region spans residues 172-238 (SCVEVGKFGL…QIMSFLAKAV (67 aa)). A disordered region spans residues 255 to 288 (NMHVTEANKKRRLREDSTAATESNSHSHSLEASD). A Nuclear localization signal motif is present at residues 262–268 (NKKRRLR). Over residues 272 to 281 (TAATESNSHS) the composition is skewed to polar residues. Residues 433 to 442 (FEFLEEYMPE) carry the AHA motif. Residues 445–477 (VFGDATTLENNNNNNNNNNNNNNNNNNNNTNGR) are disordered. Positions 454–473 (NNNNNNNNNNNNNNNNNNNN) are enriched in low complexity. The short motif at 482 to 489 (LIEELGLL) is the Nuclear export signal element.

It belongs to the HSF family. Class A subfamily. Homotrimer. Interacts with HSP70-1 and HSP70-4. Binds to CRK1. Binds to HSBP. Exhibits temperature-dependent phosphorylation. Phosphorylated by CRK1. In terms of tissue distribution, constitutively expressed.

It localises to the cytoplasm. The protein resides in the nucleus. Its function is as follows. Transcriptional activator that specifically binds DNA sequence 5'-AGAAnnTTCT-3' known as heat shock promoter elements (HSE). This Arabidopsis thaliana (Mouse-ear cress) protein is Heat stress transcription factor A-1a (HSFA1A).